A 369-amino-acid chain; its full sequence is Glutamate 5-kinase (369 aa).

Lysine 9 is a binding site for ATP. Residues serine 49, aspartate 136, and asparagine 148 each coordinate substrate. ATP is bound by residues 168 to 169 (TD) and 210 to 216 (TGGMLTK). Residues 275–355 (QGSIWVDKGA…KGVLIYRDDW (81 aa)) enclose the PUA domain.

It belongs to the glutamate 5-kinase family.

It is found in the cytoplasm. The catalysed reaction is L-glutamate + ATP = L-glutamyl 5-phosphate + ADP. Its pathway is amino-acid biosynthesis; L-proline biosynthesis; L-glutamate 5-semialdehyde from L-glutamate: step 1/2. In terms of biological role, catalyzes the transfer of a phosphate group to glutamate to form L-glutamate 5-phosphate. This Streptococcus pneumoniae serotype 2 (strain D39 / NCTC 7466) protein is Glutamate 5-kinase.